A 136-amino-acid polypeptide reads, in one-letter code: Acyl carrier protein 2, chloroplastic (136 aa).

Residues 1-51 (MASIAASASISLQARPRQLAIAASQVKSFSNGRRSSLSFNLRQLPTRLTVS) constitute a chloroplast transit peptide. One can recognise a Carrier domain in the interval 56–131 (PETVDKVCAV…QAAALIEELL (76 aa)). An O-(pantetheine 4'-phosphoryl)serine modification is found at S91.

It belongs to the acyl carrier protein (ACP) family. Post-translationally, 4'-phosphopantetheine is transferred from CoA to a specific serine of apo-ACP by acpS. This modification is essential for activity because fatty acids are bound in thioester linkage to the sulfhydryl of the prosthetic group.

It localises to the plastid. The protein resides in the chloroplast. Carrier of the growing fatty acid chain in fatty acid biosynthesis. The protein is Acyl carrier protein 2, chloroplastic (ACP2) of Arabidopsis thaliana (Mouse-ear cress).